Consider the following 150-residue polypeptide: Deoxyuridine 5'-triphosphate nucleotidohydrolase (150 aa).

Residues 69-71 (RSG), N82, and 86-88 (LID) each bind substrate.

This sequence belongs to the dUTPase family. It depends on Mg(2+) as a cofactor.

The catalysed reaction is dUTP + H2O = dUMP + diphosphate + H(+). It participates in pyrimidine metabolism; dUMP biosynthesis; dUMP from dCTP (dUTP route): step 2/2. In terms of biological role, this enzyme is involved in nucleotide metabolism: it produces dUMP, the immediate precursor of thymidine nucleotides and it decreases the intracellular concentration of dUTP so that uracil cannot be incorporated into DNA. This is Deoxyuridine 5'-triphosphate nucleotidohydrolase from Chromobacterium violaceum (strain ATCC 12472 / DSM 30191 / JCM 1249 / CCUG 213 / NBRC 12614 / NCIMB 9131 / NCTC 9757 / MK).